The sequence spans 238 residues: NADH-quinone oxidoreductase subunit I (238 aa).

2 consecutive 4Fe-4S ferredoxin-type domains span residues Leu81–Gly111 and Val123–Gly152. Positions 91, 94, 97, 101, 132, 135, 138, and 142 each coordinate [4Fe-4S] cluster.

The protein belongs to the complex I 23 kDa subunit family. In terms of assembly, NDH-1 is composed of 14 different subunits. Subunits NuoA, H, J, K, L, M, N constitute the membrane sector of the complex. The cofactor is [4Fe-4S] cluster.

It localises to the cell inner membrane. The catalysed reaction is a quinone + NADH + 5 H(+)(in) = a quinol + NAD(+) + 4 H(+)(out). In terms of biological role, NDH-1 shuttles electrons from NADH, via FMN and iron-sulfur (Fe-S) centers, to quinones in the respiratory chain. The immediate electron acceptor for the enzyme in this species is believed to be ubiquinone. Couples the redox reaction to proton translocation (for every two electrons transferred, four hydrogen ions are translocated across the cytoplasmic membrane), and thus conserves the redox energy in a proton gradient. The polypeptide is NADH-quinone oxidoreductase subunit I (Anaeromyxobacter sp. (strain Fw109-5)).